We begin with the raw amino-acid sequence, 401 residues long: uncharacterized protein (401 aa).

7 helical membrane passes run L44 to I64, L69 to L89, L99 to F119, I130 to P150, F201 to L221, I246 to A266, and L286 to V306.

It is found in the cell membrane. This is an uncharacterized protein from Mycoplasma pneumoniae (strain ATCC 29342 / M129 / Subtype 1) (Mycoplasmoides pneumoniae).